The chain runs to 50 residues: Large ribosomal subunit protein eL39 (50 aa).

The protein belongs to the eukaryotic ribosomal protein eL39 family. In terms of assembly, part of the 50S ribosomal subunit. Interacts weakly with protein L23.

In terms of biological role, binds to the 23S rRNA. Forms part of the polypeptide exit tunnel. This is Large ribosomal subunit protein eL39 (rpl39e) from Haloarcula marismortui (strain ATCC 43049 / DSM 3752 / JCM 8966 / VKM B-1809) (Halobacterium marismortui).